The chain runs to 243 residues: Uridylate kinase (243 aa).

12–15 (KLSG) contacts ATP. The segment at 20 to 25 (GAKGFG) is involved in allosteric activation by GTP. Residues Gly55 and Arg59 each coordinate ATP. UMP-binding positions include Asp74 and 135 to 142 (TGNPYFTT). ATP-binding residues include Gln163, Tyr169, and Asp172.

The protein belongs to the UMP kinase family. Homohexamer.

Its subcellular location is the cytoplasm. The catalysed reaction is UMP + ATP = UDP + ADP. The protein operates within pyrimidine metabolism; CTP biosynthesis via de novo pathway; UDP from UMP (UMPK route): step 1/1. Allosterically activated by GTP. Inhibited by UTP. Its function is as follows. Catalyzes the reversible phosphorylation of UMP to UDP. The sequence is that of Uridylate kinase from Symbiobacterium thermophilum (strain DSM 24528 / JCM 14929 / IAM 14863 / T).